The following is a 170-amino-acid chain: Adenine phosphoribosyltransferase (170 aa).

The protein belongs to the purine/pyrimidine phosphoribosyltransferase family. Homodimer.

It localises to the cytoplasm. It catalyses the reaction AMP + diphosphate = 5-phospho-alpha-D-ribose 1-diphosphate + adenine. Its pathway is purine metabolism; AMP biosynthesis via salvage pathway; AMP from adenine: step 1/1. Functionally, catalyzes a salvage reaction resulting in the formation of AMP, that is energically less costly than de novo synthesis. The chain is Adenine phosphoribosyltransferase from Acholeplasma laidlawii (strain PG-8A).